A 325-amino-acid chain; its full sequence is Lipoyl synthase (325 aa).

Cysteine 68, cysteine 73, cysteine 79, cysteine 94, cysteine 98, cysteine 101, and serine 308 together coordinate [4Fe-4S] cluster. The 218-residue stretch at 80–297 (FGGGTATFMI…ARVANELGFT (218 aa)) folds into the Radical SAM core domain.

Belongs to the radical SAM superfamily. Lipoyl synthase family. The cofactor is [4Fe-4S] cluster.

It localises to the cytoplasm. The enzyme catalyses [[Fe-S] cluster scaffold protein carrying a second [4Fe-4S](2+) cluster] + N(6)-octanoyl-L-lysyl-[protein] + 2 oxidized [2Fe-2S]-[ferredoxin] + 2 S-adenosyl-L-methionine + 4 H(+) = [[Fe-S] cluster scaffold protein] + N(6)-[(R)-dihydrolipoyl]-L-lysyl-[protein] + 4 Fe(3+) + 2 hydrogen sulfide + 2 5'-deoxyadenosine + 2 L-methionine + 2 reduced [2Fe-2S]-[ferredoxin]. Its pathway is protein modification; protein lipoylation via endogenous pathway; protein N(6)-(lipoyl)lysine from octanoyl-[acyl-carrier-protein]: step 2/2. In terms of biological role, catalyzes the radical-mediated insertion of two sulfur atoms into the C-6 and C-8 positions of the octanoyl moiety bound to the lipoyl domains of lipoate-dependent enzymes, thereby converting the octanoylated domains into lipoylated derivatives. The chain is Lipoyl synthase from Alcanivorax borkumensis (strain ATCC 700651 / DSM 11573 / NCIMB 13689 / SK2).